Reading from the N-terminus, the 269-residue chain is Carbohydrate metabolism regulator TYE7 (269 aa).

The disordered stretch occupies residues 146–178 (QPKIKQEPGTKAATKPKRRAPRKKLTESQKKAH). Basic residues predominate over residues 159-168 (TKPKRRAPRK). Residues 169–178 (KLTESQKKAH) show a composition bias toward basic and acidic residues. The bHLH domain occupies 173 to 244 (SQKKAHNKIE…EKATEYILHL (72 aa)).

As to quaternary structure, efficient DNA binding requires dimerization with another bHLH protein.

Its subcellular location is the nucleus. Key transcriptional regulator of carbohydrate metabolism. Binds the promoter sequences of the glycolytic genes at the CANNTG motif and activates their expression during growth on either fermentable or non-fermentable carbon sources as well as under hypoxic growth conditions. Complete glycolytic activation by GAL4 and TYE7 is required for full virulence. Involved in biofilm formation and negatively regulates hyphal formation under hypoxia. Also controls the expression of the copper transport protein CTR1. This chain is Carbohydrate metabolism regulator TYE7 (TYE7), found in Candida albicans (strain SC5314 / ATCC MYA-2876) (Yeast).